The following is a 133-amino-acid chain: Small ribosomal subunit protein uS8 (133 aa).

Belongs to the universal ribosomal protein uS8 family. In terms of assembly, part of the 30S ribosomal subunit. Contacts proteins S5 and S12.

Functionally, one of the primary rRNA binding proteins, it binds directly to 16S rRNA central domain where it helps coordinate assembly of the platform of the 30S subunit. In Leptospira borgpetersenii serovar Hardjo-bovis (strain JB197), this protein is Small ribosomal subunit protein uS8.